The chain runs to 1567 residues: ABC multidrug transporter MDR1 (1567 aa).

Pro residues predominate over residues methionine 1–glycine 11. A disordered region spans residues methionine 1–aspartate 37. Over residues serine 22–proline 32 the composition is skewed to polar residues. Residues asparagine 149, asparagine 157, and asparagine 356 are each glycosylated (N-linked (GlcNAc...) asparagine). In terms of domain architecture, ABC transporter 1 spans valine 167 to proline 432. 6 helical membrane-spanning segments follow: residues serine 543–phenylalanine 563, glycine 571–isoleucine 591, isoleucine 636–leucine 656, alanine 661–phenylalanine 681, isoleucine 691–phenylalanine 711, and leucine 798–leucine 818. N-linked (GlcNAc...) asparagine glycans are attached at residues asparagine 819, asparagine 895, and asparagine 912. The region spanning phenylalanine 891–alanine 1134 is the ABC transporter 2 domain. Glycine 927–threonine 934 serves as a coordination point for ATP. The tract at residues glutamate 1172 to proline 1202 is disordered. A helical membrane pass occupies residues isoleucine 1231 to leucine 1251. Asparagine 1253 carries an N-linked (GlcNAc...) asparagine glycan. The next 5 membrane-spanning stretches (helical) occupy residues alanine 1257–valine 1277, valine 1305–alanine 1325, isoleucine 1345–isoleucine 1365, glutamate 1372–leucine 1392, and glycine 1498–isoleucine 1518.

The protein belongs to the ABC transporter superfamily. ABCG family. PDR (TC 3.A.1.205) subfamily.

The protein localises to the cell membrane. It catalyses the reaction voriconazole(in) + ATP + H2O = voriconazole(out) + ADP + phosphate + H(+). The enzyme catalyses fluconazole(in) + ATP + H2O = fluconazole(out) + ADP + phosphate + H(+). It carries out the reaction (R)-miconazole(in) + ATP + H2O = (R)-miconazole(out) + ADP + phosphate + H(+). The catalysed reaction is (S)-miconazole(in) + ATP + H2O = (S)-miconazole(out) + ADP + phosphate + H(+). In terms of biological role, pleiotropic ABC efflux transporter that may be involved in the modulation susceptibility to a wide range of unrelated cytotoxic compounds. The protein is ABC multidrug transporter MDR1 of Trichophyton equinum (strain ATCC MYA-4606 / CBS 127.97) (Horse ringworm fungus).